We begin with the raw amino-acid sequence, 147 residues long: Catabolic 3-dehydroquinase 2 (147 aa).

Tyrosine 23 functions as the Proton acceptor in the catalytic mechanism. Substrate is bound by residues asparagine 74, histidine 80, and aspartate 87. The active-site Proton donor is histidine 100. Residues 101–102 (IT) and arginine 111 each bind substrate.

This sequence belongs to the type-II 3-dehydroquinase family. In terms of assembly, homododecamer. Adopts a ring-like structure, composed of an arrangement of two hexameric rings stacked on top of one another.

The catalysed reaction is 3-dehydroquinate = 3-dehydroshikimate + H2O. The protein operates within aromatic compound metabolism; 3,4-dihydroxybenzoate biosynthesis; 3,4-dihydroxybenzoate from 3-dehydroquinate: step 1/2. Its function is as follows. Is involved in the catabolism of quinate. Allows the utilization of quinate as carbon source via the beta-ketoadipate pathway. This chain is Catabolic 3-dehydroquinase 2, found in Aspergillus terreus (strain NIH 2624 / FGSC A1156).